Reading from the N-terminus, the 499-residue chain is GTPase Der (499 aa).

2 consecutive EngA-type G domains span residues 3-166 (PVVA…LETL) and 213-386 (IKFA…QSAT). Residues 9–16 (GRPNVGKS), 56–60 (DTGGI), 118–121 (NKTD), 219–226 (GRPNVGKS), 266–270 (DTAGV), and 331–334 (NKWD) each bind GTP. The region spanning 387-471 (RRTSTAMLTR…PIRVEFQESA (85 aa)) is the KH-like domain. The tract at residues 476 to 499 (GRKNTMTLSQERQRKRLLKAKTKK) is disordered. The span at 488–499 (QRKRLLKAKTKK) shows a compositional bias: basic residues.

It belongs to the TRAFAC class TrmE-Era-EngA-EngB-Septin-like GTPase superfamily. EngA (Der) GTPase family. Associates with the 50S ribosomal subunit.

Functionally, GTPase that plays an essential role in the late steps of ribosome biogenesis. This Aeromonas salmonicida (strain A449) protein is GTPase Der.